The sequence spans 141 residues: Nucleoside diphosphate kinase (141 aa).

Residues Lys-11, Phe-59, Arg-87, Thr-93, Arg-104, and Asn-114 each coordinate ATP. Residue His-117 is the Pros-phosphohistidine intermediate of the active site.

It belongs to the NDK family. Homotetramer. Mg(2+) is required as a cofactor.

It is found in the cytoplasm. It carries out the reaction a 2'-deoxyribonucleoside 5'-diphosphate + ATP = a 2'-deoxyribonucleoside 5'-triphosphate + ADP. The enzyme catalyses a ribonucleoside 5'-diphosphate + ATP = a ribonucleoside 5'-triphosphate + ADP. Functionally, major role in the synthesis of nucleoside triphosphates other than ATP. The ATP gamma phosphate is transferred to the NDP beta phosphate via a ping-pong mechanism, using a phosphorylated active-site intermediate. The polypeptide is Nucleoside diphosphate kinase (Laribacter hongkongensis (strain HLHK9)).